The following is a 156-amino-acid chain: Glutamate-rich protein 2 (156 aa).

Disordered regions lie at residues 29–66 (LQDIDDKLSESAEDDGEDDTNDEDDDEDSNPKKNTQAP) and 116–156 (EKTQ…EDGS). 2 stretches are compositionally biased toward acidic residues: residues 39-56 (SAEDDGEDDTNDEDDDED) and 140-156 (SDEELSDESSDEGEDGS).

The protein is Glutamate-rich protein 2 (ERICH2) of Homo sapiens (Human).